Here is a 420-residue protein sequence, read N- to C-terminus: Glucose-1-phosphate adenylyltransferase (420 aa).

Residues Y107, G173, 188-189, and S206 contribute to the alpha-D-glucose 1-phosphate site; that span reads EK.

Belongs to the bacterial/plant glucose-1-phosphate adenylyltransferase family. As to quaternary structure, homotetramer.

The catalysed reaction is alpha-D-glucose 1-phosphate + ATP + H(+) = ADP-alpha-D-glucose + diphosphate. It participates in glycan biosynthesis; glycogen biosynthesis. Involved in the biosynthesis of ADP-glucose, a building block required for the elongation reactions to produce glycogen. Catalyzes the reaction between ATP and alpha-D-glucose 1-phosphate (G1P) to produce pyrophosphate and ADP-Glc. The sequence is that of Glucose-1-phosphate adenylyltransferase from Shewanella sp. (strain MR-4).